Reading from the N-terminus, the 234-residue chain is Large ribosomal subunit protein uL1 (234 aa).

Belongs to the universal ribosomal protein uL1 family. As to quaternary structure, part of the 50S ribosomal subunit.

Binds directly to 23S rRNA. The L1 stalk is quite mobile in the ribosome, and is involved in E site tRNA release. Functionally, protein L1 is also a translational repressor protein, it controls the translation of the L11 operon by binding to its mRNA. The polypeptide is Large ribosomal subunit protein uL1 (Baumannia cicadellinicola subsp. Homalodisca coagulata).